We begin with the raw amino-acid sequence, 376 residues long: PqqA peptide cyclase (376 aa).

In terms of domain architecture, Radical SAM core spans 4-219 (VPPPLSVLLE…VETARRSLGD (216 aa)). The [4Fe-4S] cluster site is built by Cys18, Cys22, and Cys25.

It belongs to the radical SAM superfamily. PqqE family. In terms of assembly, interacts with PqqD. The interaction is necessary for activity of PqqE. [4Fe-4S] cluster serves as cofactor.

It catalyses the reaction [PQQ precursor protein] + S-adenosyl-L-methionine = E-Y cross-linked-[PQQ precursor protein] + 5'-deoxyadenosine + L-methionine + H(+). It participates in cofactor biosynthesis; pyrroloquinoline quinone biosynthesis. Catalyzes the cross-linking of a glutamate residue and a tyrosine residue in the PqqA protein as part of the biosynthesis of pyrroloquinoline quinone (PQQ). The protein is PqqA peptide cyclase of Xanthomonas campestris pv. campestris (strain 8004).